A 540-amino-acid chain; its full sequence is Signal peptide peptidase-like 3 (540 aa).

The signal sequence occupies residues 1-28 (MSSFDPPNHRYSALVLILLLLGFSVAAA). Residues 29–194 (DDVSWTEDSS…LYAPKRPAVD (166 aa)) lie on the Lumenal side of the membrane. One can recognise a PA domain in the interval 98-172 (SHLSSRLDGH…ISKSSGDALN (75 aa)). N-linked (GlcNAc...) asparagine glycosylation is found at N155 and N172. The chain crosses the membrane as a helical span at residues 195–215 (LTAGLLLLMAVGTVVVASLWS). Residues 216 to 250 (ELTDPDQANESYSILAKDVSSAGTRKDDPEKEILD) are Cytoplasmic-facing. A helical transmembrane segment spans residues 251–273 (ISVTGAVFFIVTASIFLLLLFYF). At 274–276 (MSS) the chain is on the lumenal side. The chain crosses the membrane as a helical span at residues 277–299 (WFVWVLTIFFCIGGMQGMHNIIM). The Cytoplasmic segment spans residues 300-321 (AVILRKCRHLARKSVKLPLLGT). The helical transmembrane segment at 322–342 (MSVLSLLVNIVCLAFAVFWFI) threads the bilayer. The Lumenal portion of the chain corresponds to 343–347 (KRHTS). The helical transmembrane segment at 348-368 (YSWVGQDILGICLMITALQVV) threads the bilayer. Residues 369–377 (RLPNIKVAT) are Cytoplasmic-facing. A helical transmembrane segment spans residues 378-398 (VLLCCAFVYDIFWVFISPLIF). The active site involves D387. The Lumenal segment spans residues 399–429 (HESVMIVVAQGDSSTGESIPMLLRIPRFFDP). Residues 430 to 450 (WGGYDMIGFGDILFPGLLISF) form a helical membrane-spanning segment. D440 is an active-site residue. At 451–466 (ASRYDKIKKRVISNGY) the chain is on the cytoplasmic side. The chain crosses the membrane as a helical span at residues 467-487 (FLWLTIGYGIGLLLTYLGLYL). Residues 488–492 (MDGHG) lie on the Lumenal side of the membrane. A helical membrane pass occupies residues 493–513 (QPALLYIVPCTLGLAVILGLV). Residues 494–496 (PAL) carry the PAL motif. The Cytoplasmic portion of the chain corresponds to 514–540 (RGELKELWNYGIEESESHTPEDPMPVA).

Belongs to the peptidase A22B family. In terms of processing, glycosylated. Ubiquitous.

The protein localises to the endosome membrane. Functionally, intramembrane-cleaving aspartic protease (I-CLiP) that cleaves type II membrane signal peptides in the hydrophobic plane of the membrane. In Arabidopsis thaliana (Mouse-ear cress), this protein is Signal peptide peptidase-like 3 (SPPL3).